A 109-amino-acid polypeptide reads, in one-letter code: Large ribosomal subunit protein uL24 (109 aa).

Belongs to the universal ribosomal protein uL24 family. As to quaternary structure, part of the 50S ribosomal subunit.

Its function is as follows. One of two assembly initiator proteins, it binds directly to the 5'-end of the 23S rRNA, where it nucleates assembly of the 50S subunit. In terms of biological role, one of the proteins that surrounds the polypeptide exit tunnel on the outside of the subunit. The sequence is that of Large ribosomal subunit protein uL24 from Ehrlichia chaffeensis (strain ATCC CRL-10679 / Arkansas).